The following is a 206-amino-acid chain: ATP-dependent Clp protease proteolytic subunit 1 (206 aa).

Ser106 serves as the catalytic Nucleophile. The active site involves His131.

The protein belongs to the peptidase S14 family. As to quaternary structure, fourteen ClpP subunits assemble into 2 heptameric rings which stack back to back to give a disk-like structure with a central cavity, resembling the structure of eukaryotic proteasomes.

The protein resides in the cytoplasm. The catalysed reaction is Hydrolysis of proteins to small peptides in the presence of ATP and magnesium. alpha-casein is the usual test substrate. In the absence of ATP, only oligopeptides shorter than five residues are hydrolyzed (such as succinyl-Leu-Tyr-|-NHMec, and Leu-Tyr-Leu-|-Tyr-Trp, in which cleavage of the -Tyr-|-Leu- and -Tyr-|-Trp bonds also occurs).. Its function is as follows. Cleaves peptides in various proteins in a process that requires ATP hydrolysis. Has a chymotrypsin-like activity. Plays a major role in the degradation of misfolded proteins. The protein is ATP-dependent Clp protease proteolytic subunit 1 of Methylococcus capsulatus (strain ATCC 33009 / NCIMB 11132 / Bath).